The following is a 125-amino-acid chain: Small ribosomal subunit protein uS13 (125 aa).

The tract at residues Arg92 to Lys125 is disordered.

It belongs to the universal ribosomal protein uS13 family. As to quaternary structure, part of the 30S ribosomal subunit. Forms a loose heterodimer with protein S19. Forms two bridges to the 50S subunit in the 70S ribosome.

Located at the top of the head of the 30S subunit, it contacts several helices of the 16S rRNA. In the 70S ribosome it contacts the 23S rRNA (bridge B1a) and protein L5 of the 50S subunit (bridge B1b), connecting the 2 subunits; these bridges are implicated in subunit movement. Contacts the tRNAs in the A and P-sites. This is Small ribosomal subunit protein uS13 from Pelodictyon phaeoclathratiforme (strain DSM 5477 / BU-1).